The sequence spans 176 residues: bZIP transcription factor 8 (176 aa).

Positions proline 44–lysine 101 are disordered. Residues serine 47–glycine 57 show a composition bias toward low complexity. A compositionally biased stretch (basic and acidic residues) spans serine 58–lysine 80. Residues serine 65 to methionine 128 enclose the bZIP domain. Residues lysine 67–lysine 92 form a basic motif region. Residues lysine 81 to glutamate 90 show a composition bias toward basic residues. The segment covering glutamine 91–lysine 101 has biased composition (basic and acidic residues). The tract at residues leucine 100–leucine 107 is leucine-zipper.

It belongs to the bZIP family.

The sequence is that of bZIP transcription factor 8 (zip-8) from Caenorhabditis elegans.